Reading from the N-terminus, the 189-residue chain is Putative transcription factor ovo-like protein 3 (189 aa).

The interval 1 to 20 (MPRVFLVRSRRPQPPNWSHL) is disordered. C2H2-type zinc fingers lie at residues 69–91 (LGCPLCPKAFPLQRMLTRHLKCH), 97–119 (HVCHYCGKGFHDAFDLKRHMRTH), 125–148 (FRCGACGKAFTQRCSLEAHLAKVH), and 164–186 (HVCEDCGFTSSRPDAYAQHRTLH).

The protein belongs to the krueppel C2H2-type zinc-finger protein family.

The protein resides in the nucleus. Its function is as follows. May act as a transcription regulator. In Mus musculus (Mouse), this protein is Putative transcription factor ovo-like protein 3 (Ovol3).